Consider the following 346-residue polypeptide: N-acetyl-gamma-glutamyl-phosphate reductase (346 aa).

Residue Cys149 is part of the active site.

It belongs to the NAGSA dehydrogenase family. Type 1 subfamily.

It is found in the cytoplasm. It catalyses the reaction N-acetyl-L-glutamate 5-semialdehyde + phosphate + NADP(+) = N-acetyl-L-glutamyl 5-phosphate + NADPH + H(+). It functions in the pathway amino-acid biosynthesis; L-arginine biosynthesis; N(2)-acetyl-L-ornithine from L-glutamate: step 3/4. Catalyzes the NADPH-dependent reduction of N-acetyl-5-glutamyl phosphate to yield N-acetyl-L-glutamate 5-semialdehyde. This Oceanobacillus iheyensis (strain DSM 14371 / CIP 107618 / JCM 11309 / KCTC 3954 / HTE831) protein is N-acetyl-gamma-glutamyl-phosphate reductase.